The primary structure comprises 1304 residues: Splicing factor 3B subunit 1 (1304 aa).

Disordered regions lie at residues 100 to 119 (QYDPFAEHRPPKIADREDEY) and 124 to 148 (RTMIISPERLDPFADGGKTPDPKMN). A compositionally biased stretch (basic and acidic residues) spans 104 to 119 (FAEHRPPKIADREDEY). Threonine 125 carries the post-translational modification Phosphothreonine. Serine 129 carries the post-translational modification Phosphoserine. Lysine 141 carries the post-translational modification N6-acetyllysine. Threonine 142 carries the phosphothreonine modification. Arginine 157 carries the post-translational modification Citrulline. The disordered stretch occupies residues 173-360 (AEKAKAGELK…PVLTPGKTPI (188 aa)). The interval 190–342 (SQPPSKRKRR…KRKSRWDETP (153 aa)) is U2AF homology region; mediates interaction with RBM39. Serine 194 carries the post-translational modification Phosphoserine. A phosphothreonine mark is found at threonine 203, threonine 207, and threonine 211. Lysine 214 carries the N6-acetyllysine; alternate modification. Lysine 214 participates in a covalent cross-link: Glycyl lysine isopeptide (Lys-Gly) (interchain with G-Cter in SUMO2); alternate. Phosphothreonine is present on residues threonine 223 and threonine 227. Positions 223–491 (TPGHTPSLRW…VDESTLSPEE (269 aa)) are interaction with PPP1R8. Position 229 is a phosphoserine (serine 229). Positions 231-241 (RWDETPGRAKG) are enriched in basic and acidic residues. Threonine 235, threonine 244, threonine 248, threonine 257, threonine 261, threonine 267, threonine 273, and threonine 278 each carry phosphothreonine. Serine 287 is modified (phosphoserine). The segment covering 291–304 (NRWDETPKTERDTP) has biased composition (basic and acidic residues). 4 positions are modified to phosphothreonine: threonine 296, threonine 299, threonine 303, and threonine 313. Serine 322 carries the post-translational modification Phosphoserine. Threonine 326 and threonine 328 each carry phosphothreonine. At serine 332 the chain carries Phosphoserine. Phosphothreonine is present on threonine 341. The span at 342-352 (PASQMGGSTPV) shows a compositional bias: polar residues. Residues serine 344 and serine 349 each carry the phosphoserine modification. Residues threonine 350 and threonine 354 each carry the phosphothreonine modification. At serine 400 the chain carries Phosphoserine. Residue lysine 413 forms a Glycyl lysine isopeptide (Lys-Gly) (interchain with G-Cter in SUMO2); alternate linkage. Lysine 413 participates in a covalent cross-link: Glycyl lysine isopeptide (Lys-Gly) (interchain with G-Cter in SUMO1); alternate. Position 426 is a phosphothreonine (threonine 426). A Glycyl lysine isopeptide (Lys-Gly) (interchain with G-Cter in SUMO2) cross-link involves residue lysine 430. Residue threonine 434 is modified to Phosphothreonine; by DYRK1A. Phosphothreonine is present on threonine 436. Residue serine 488 is modified to Phosphoserine. HEAT repeat units lie at residues 529–568 (GPLFNQILPLLMSPTLEDQERHLLVKVIDRILYKLDDLVR), 569–603 (PYVHKILVVIEPLLIDEDYYARVEGREIISNLAKA), 604–641 (AGLATMISTMRPDIDNMDEYVRNTTARAFAVVASALGI), 643–677 (SLLPFLKAVCKSKKSWQARHTGIKIVQQIAILMGC), 680–718 (LPHLRSLVEIIEHGLVDEQQKVRTISALAIAALAEAATP), 763–801 (NYYTREVMLILIREFQSPDEEMKKIVLKVVKQCCGTDGV), 843–881 (KVGAAEIISRIVDDLKDEAEQYRKMVMETIEKIMGNLGA), 1010–1048 (TPPIKDLLPRLTPILKNRHEKVQENCIDLVGRIADRGAE), 1052–1090 (AREWMRICFELLELLKAHKKAIRRATVNTFGYIAKAIGP), 1122–1160 (TCSPFTVLPALMNEYRVPELNVQNGVLKSLSFLFEYIGE), and 1163–1201 (KDYIYAVTPLLEDALMDRDLVHRQTASAVVQHMSLGVYG). Residues 529–568 (GPLFNQILPLLMSPTLEDQERHLLVKVIDRILYKLDDLVR) are interaction with SF3B14. The interaction with PHF5A stretch occupies residues 547–550 (QERH). N6-acetyllysine occurs at positions 554 and 562. The segment at 1156-1157 (EY) is interaction with PHF5A. The segment at 1248 to 1304 (QYCLQGLFHPARKVRDVYWKIYNSIYIGSQDALIAHYPRIYNDDKNTYIRYELDYIL) is interaction with SF3B3 and SF3B5.

It belongs to the SF3B1 family. In terms of assembly, component of the 17S U2 SnRNP complex, a ribonucleoprotein complex that contains small nuclear RNA (snRNA) U2 and a number of specific proteins. Part of the SF3B subcomplex of the 17S U2 SnRNP complex. SF3B associates with the splicing subcomplex SF3A and a 12S RNA unit to form the U2 small nuclear ribonucleoproteins complex (U2 snRNP). Within the SF3B complex, interacts directly (via HEAT domain) with SF3B3, SF3B5, SF3B6 and (via HEAT domain) with PHF5A. The SF3B subcomplex interacts with U2AF2. Identified in the spliceosome C complex. Component of the minor (U12-type spliceosome) spliceosome. Within the minor spliceosome complex, interacts with SCNM1 and CRIPT. Component of the B-WICH complex, at least composed of SMARCA5/SNF2H, BAZ1B/WSTF, SF3B1, DEK, MYO1C, ERCC6, MYBBP1A and DDX21. Phosphorylated form interacts with PPP1R8. Interacts with PQBP1. Interacts with RBM17. Interacts with RBM39. Interacts with SETX. Interacts with RBM15. Interacts with USH1G. Interacts with SDE2. Interacts with U2AF1. Interacts with CACTIN. Interacts with ZRSR1. Interacts with CYREN. Post-translationally, phosphorylated. Phosphorylation occurs concomitantly with the splicing catalytic steps. Phosphorylation on Thr-244, Thr-248 and Thr-313 by cyclin-dependent kinases promotes interaction with PPP1R8 during mitosis. Citrullinated by PADI4.

Its subcellular location is the nucleus. The protein localises to the nucleus speckle. Component of the 17S U2 SnRNP complex of the spliceosome, a large ribonucleoprotein complex that removes introns from transcribed pre-mRNAs. The 17S U2 SnRNP complex (1) directly participates in early spliceosome assembly and (2) mediates recognition of the intron branch site during pre-mRNA splicing by promoting the selection of the pre-mRNA branch-site adenosine, the nucleophile for the first step of splicing. Within the 17S U2 SnRNP complex, SF3B1 is part of the SF3B subcomplex, which is required for 'A' complex assembly formed by the stable binding of U2 snRNP to the branchpoint sequence in pre-mRNA. Sequence independent binding of SF3A and SF3B subcomplexes upstream of the branch site is essential, it may anchor U2 snRNP to the pre-mRNA. May also be involved in the assembly of the 'E' complex. Also acts as a component of the minor spliceosome, which is involved in the splicing of U12-type introns in pre-mRNAs. Together with other U2 snRNP complex components may also play a role in the selective processing of microRNAs (miRNAs) from the long primary miRNA transcript, pri-miR-17-92. This is Splicing factor 3B subunit 1 from Homo sapiens (Human).